The sequence spans 290 residues: Xyloglucan endotransglucosylase/hydrolase protein 9 (290 aa).

The N-terminal stretch at 1–26 (MVGMDLFKCVMMIMVLVVSCGEAVSG) is a signal peptide. Positions 27–215 (AKFDELYRSS…WSHAPFVASY (189 aa)) constitute a GH16 domain. Asn55 carries an N-linked (GlcNAc...) asparagine glycan. Glu101 acts as the Nucleophile in catalysis. The Proton donor role is filled by Glu105. Residue Glu105 participates in xyloglucan binding. N-linked (GlcNAc...) asparagine glycosylation is present at Asn109. Xyloglucan contacts are provided by residues 118-120 (QTN), 128-130 (NRE), 194-195 (DW), and Gly199. 2 cysteine pairs are disulfide-bonded: Cys223–Cys234 and Cys271–Cys284. Arg276 contacts xyloglucan.

It belongs to the glycosyl hydrolase 16 family. XTH group 1 subfamily. In terms of processing, contains at least one intrachain disulfide bond essential for its enzymatic activity. As to expression, highly expressed in shoot apices. In the vegetative and reproductive phases, it accumulates in the shoot apex region, where cell division is most active. In the reproductive phase, it is also expressed in flower buds, flower stalks and internodes bearing flowers.

Its subcellular location is the secreted. The protein resides in the cell wall. It is found in the extracellular space. It localises to the apoplast. It catalyses the reaction breaks a beta-(1-&gt;4) bond in the backbone of a xyloglucan and transfers the xyloglucanyl segment on to O-4 of the non-reducing terminal glucose residue of an acceptor, which can be a xyloglucan or an oligosaccharide of xyloglucan.. In terms of biological role, catalyzes xyloglucan endohydrolysis (XEH) and/or endotransglycosylation (XET). Cleaves and religates xyloglucan polymers, an essential constituent of the primary cell wall, and thereby participates in cell wall construction of growing tissues. Involved in internodal cell elongation. This chain is Xyloglucan endotransglucosylase/hydrolase protein 9 (XTH9), found in Arabidopsis thaliana (Mouse-ear cress).